The primary structure comprises 421 residues: UDP-N-acetylglucosamine 1-carboxyvinyltransferase (421 aa).

Residue 22-23 (KN) coordinates phosphoenolpyruvate. Arg-93 contributes to the UDP-N-acetyl-alpha-D-glucosamine binding site. Cys-117 serves as the catalytic Proton donor. At Cys-117 the chain carries 2-(S-cysteinyl)pyruvic acid O-phosphothioketal. UDP-N-acetyl-alpha-D-glucosamine is bound by residues 122-126 (RPVDL), Asp-308, and Ile-330.

The protein belongs to the EPSP synthase family. MurA subfamily.

The protein localises to the cytoplasm. The enzyme catalyses phosphoenolpyruvate + UDP-N-acetyl-alpha-D-glucosamine = UDP-N-acetyl-3-O-(1-carboxyvinyl)-alpha-D-glucosamine + phosphate. The protein operates within cell wall biogenesis; peptidoglycan biosynthesis. Functionally, cell wall formation. Adds enolpyruvyl to UDP-N-acetylglucosamine. This is UDP-N-acetylglucosamine 1-carboxyvinyltransferase from Pseudomonas syringae pv. tomato (strain ATCC BAA-871 / DC3000).